Consider the following 692-residue polypeptide: Potassium-transporting ATPase ATP-binding subunit (692 aa).

4 consecutive transmembrane segments (helical) span residues 50-70, 74-94, 240-260, and 266-286; these read PIMF…FLPS, SIPG…VLFA, LTLI…YLGF, and VLVA…LSAI. Asp-319 functions as the 4-aspartylphosphate intermediate in the catalytic mechanism. Residues Asp-356, Glu-360, 388-395, and Lys-407 contribute to the ATP site; that span reads FKAETRMS. Mg(2+)-binding residues include Asp-530 and Asp-534. 3 helical membrane passes run 600-620, 628-648, and 672-692; these read FAII…LNIM, AILS…PLAM, and GGVI…GLFI.

Belongs to the cation transport ATPase (P-type) (TC 3.A.3) family. Type IA subfamily. The system is composed of three essential subunits: KdpA, KdpB and KdpC.

The protein resides in the cell membrane. The enzyme catalyses K(+)(out) + ATP + H2O = K(+)(in) + ADP + phosphate + H(+). Functionally, part of the high-affinity ATP-driven potassium transport (or Kdp) system, which catalyzes the hydrolysis of ATP coupled with the electrogenic transport of potassium into the cytoplasm. This subunit is responsible for energy coupling to the transport system and for the release of the potassium ions to the cytoplasm. This Bacillus thuringiensis (strain Al Hakam) protein is Potassium-transporting ATPase ATP-binding subunit.